The following is a 460-amino-acid chain: Probable protein phosphatase 2C 38 (460 aa).

2 disordered regions span residues 1–30 (MVAV…AVPS) and 83–111 (RPMR…GRIA). Positions 100–109 (PRDREPRDGR) are enriched in basic and acidic residues. Residues 118–432 (AASLYTMRGN…DDCAVVCLFL (315 aa)) form the PPM-type phosphatase domain. D154 and G155 together coordinate Mn(2+). The disordered stretch occupies residues 192–219 (VTSSMTEGGGTERMDRDTETPLGTEENG). The span at 201 to 210 (GTERMDRDTE) shows a compositional bias: basic and acidic residues. Mn(2+) is bound by residues D377 and D423.

Belongs to the PP2C family. The cofactor is Mg(2+). Requires Mn(2+) as cofactor.

The enzyme catalyses O-phospho-L-seryl-[protein] + H2O = L-seryl-[protein] + phosphate. It carries out the reaction O-phospho-L-threonyl-[protein] + H2O = L-threonyl-[protein] + phosphate. The sequence is that of Probable protein phosphatase 2C 38 from Oryza sativa subsp. japonica (Rice).